The chain runs to 188 residues: Probable DNA-directed RNA polymerase subunit delta (188 aa).

Residues 14–83 enclose the HTH HARE-type domain; sequence LSMIEVARAI…GENKWGLRSW (70 aa). The tract at residues 119 to 188 is disordered; it reads EDAIDYSADD…EDEEDEDEEE (70 aa).

The protein belongs to the RpoE family. RNAP is composed of a core of 2 alpha, a beta and a beta' subunits. The core is associated with a delta subunit and one of several sigma factors.

Its function is as follows. Participates in both the initiation and recycling phases of transcription. In the presence of the delta subunit, RNAP displays an increased specificity of transcription, a decreased affinity for nucleic acids, and an increased efficiency of RNA synthesis because of enhanced recycling. The polypeptide is Probable DNA-directed RNA polymerase subunit delta (Streptococcus equi subsp. zooepidemicus (strain H70)).